Consider the following 356-residue polypeptide: UDP-N-acetylglucosamine--N-acetylmuramyl-(pentapeptide) pyrophosphoryl-undecaprenol N-acetylglucosamine transferase (356 aa).

2 residues coordinate UDP-N-acetyl-alpha-D-glucosamine: serine 195 and glutamine 287.

Belongs to the glycosyltransferase 28 family. MurG subfamily.

It localises to the cell membrane. It catalyses the reaction Mur2Ac(oyl-L-Ala-gamma-D-Glu-L-Lys-D-Ala-D-Ala)-di-trans,octa-cis-undecaprenyl diphosphate + UDP-N-acetyl-alpha-D-glucosamine = beta-D-GlcNAc-(1-&gt;4)-Mur2Ac(oyl-L-Ala-gamma-D-Glu-L-Lys-D-Ala-D-Ala)-di-trans,octa-cis-undecaprenyl diphosphate + UDP + H(+). The protein operates within cell wall biogenesis; peptidoglycan biosynthesis. Its function is as follows. Cell wall formation. Catalyzes the transfer of a GlcNAc subunit on undecaprenyl-pyrophosphoryl-MurNAc-pentapeptide (lipid intermediate I) to form undecaprenyl-pyrophosphoryl-MurNAc-(pentapeptide)GlcNAc (lipid intermediate II). This Streptococcus gordonii (strain Challis / ATCC 35105 / BCRC 15272 / CH1 / DL1 / V288) protein is UDP-N-acetylglucosamine--N-acetylmuramyl-(pentapeptide) pyrophosphoryl-undecaprenol N-acetylglucosamine transferase.